Reading from the N-terminus, the 344-residue chain is tRNA N6-adenosine threonylcarbamoyltransferase (344 aa).

The Fe cation site is built by His113 and His117. Residues 135–139 (LVSGG), Asp169, Gly182, Asp186, and Asn278 contribute to the substrate site. Asp306 serves as a coordination point for Fe cation.

Belongs to the KAE1 / TsaD family. Fe(2+) serves as cofactor.

The protein localises to the cytoplasm. The enzyme catalyses L-threonylcarbamoyladenylate + adenosine(37) in tRNA = N(6)-L-threonylcarbamoyladenosine(37) in tRNA + AMP + H(+). Its function is as follows. Required for the formation of a threonylcarbamoyl group on adenosine at position 37 (t(6)A37) in tRNAs that read codons beginning with adenine. Is involved in the transfer of the threonylcarbamoyl moiety of threonylcarbamoyl-AMP (TC-AMP) to the N6 group of A37, together with TsaE and TsaB. TsaD likely plays a direct catalytic role in this reaction. This is tRNA N6-adenosine threonylcarbamoyltransferase from Corynebacterium efficiens (strain DSM 44549 / YS-314 / AJ 12310 / JCM 11189 / NBRC 100395).